Here is a 187-residue protein sequence, read N- to C-terminus: MLNDMDFIKTCDVPGPTKEAIRAIILYKSAVTPNDEVVDVGCGTGGITCEFAQRAKKVTSIDTNPDAISVTKQNLEKFNLGDNVELINDSGSNALKNIDNMDIAVVGGSGRELEDILEIIDSKLNPKGRIIVTAILVDTKIEAINKLKKLNYNPKIMEVNISNGRVLDRGVMMISENPIAIISANKR.

S-adenosyl-L-methionine-binding positions include T17, 41 to 45 (GCGTG), D62, and G91.

Belongs to the methyltransferase superfamily. Archaeal-type CbiT family.

It carries out the reaction Co-precorrin-6B + S-adenosyl-L-methionine = Co-precorrin-7 + S-adenosyl-L-homocysteine + CO2. The protein operates within cofactor biosynthesis; adenosylcobalamin biosynthesis; cob(II)yrinate a,c-diamide from sirohydrochlorin (anaerobic route): step 8/10. In terms of biological role, catalyzes the methylation of C-15 in cobalt-precorrin-6B followed by the decarboxylation of C-12 to form cobalt-precorrin-7. In Methanobrevibacter smithii (strain ATCC 35061 / DSM 861 / OCM 144 / PS), this protein is Probable cobalt-precorrin-6B C(15)-methyltransferase (decarboxylating).